Consider the following 658-residue polypeptide: DNA mismatch repair protein MutL (658 aa).

The span at 114–130 (RQEDSSHATQVKAEDGK) shows a compositional bias: basic and acidic residues. 3 disordered regions span residues 114 to 137 (RQED…PTAA), 369 to 401 (DYPT…APQQ), and 438 to 457 (FGNM…LSDG).

The protein belongs to the DNA mismatch repair MutL/HexB family.

Functionally, this protein is involved in the repair of mismatches in DNA. It is required for dam-dependent methyl-directed DNA mismatch repair. May act as a 'molecular matchmaker', a protein that promotes the formation of a stable complex between two or more DNA-binding proteins in an ATP-dependent manner without itself being part of a final effector complex. This is DNA mismatch repair protein MutL from Neisseria meningitidis serogroup A / serotype 4A (strain DSM 15465 / Z2491).